Consider the following 83-residue polypeptide: uncharacterized protein (83 aa).

Positions 58-83 (EHGHDDEYDEFSDPNAWVPRRSRDTG) are disordered.

This is an uncharacterized protein from Mycobacterium tuberculosis (strain CDC 1551 / Oshkosh).